The primary structure comprises 453 residues: Bifunctional protein GlmU (453 aa).

The pyrophosphorylase stretch occupies residues 1–225 (MNIVILAAGT…EWETLGVNSK (225 aa)). UDP-N-acetyl-alpha-D-glucosamine-binding positions include 6–9 (LAAG), K20, Q71, 76–77 (GT), 98–100 (YGD), G135, E150, N165, and N223. A Mg(2+)-binding site is contributed by D100. Position 223 (N223) interacts with Mg(2+). The tract at residues 226–246 (AQLAELERIHQRKLAEALLAD) is linker. An N-acetyltransferase region spans residues 247 to 453 (GVTLADPARI…GYVRPVKKKS (207 aa)). UDP-N-acetyl-alpha-D-glucosamine contacts are provided by R329 and K347. The Proton acceptor role is filled by H359. UDP-N-acetyl-alpha-D-glucosamine contacts are provided by Y362 and N373. Residues A376, 382 to 383 (NY), S401, and A419 contribute to the acetyl-CoA site.

The protein in the N-terminal section; belongs to the N-acetylglucosamine-1-phosphate uridyltransferase family. This sequence in the C-terminal section; belongs to the transferase hexapeptide repeat family. In terms of assembly, homotrimer. Mg(2+) is required as a cofactor.

Its subcellular location is the cytoplasm. The enzyme catalyses alpha-D-glucosamine 1-phosphate + acetyl-CoA = N-acetyl-alpha-D-glucosamine 1-phosphate + CoA + H(+). It catalyses the reaction N-acetyl-alpha-D-glucosamine 1-phosphate + UTP + H(+) = UDP-N-acetyl-alpha-D-glucosamine + diphosphate. The protein operates within nucleotide-sugar biosynthesis; UDP-N-acetyl-alpha-D-glucosamine biosynthesis; N-acetyl-alpha-D-glucosamine 1-phosphate from alpha-D-glucosamine 6-phosphate (route II): step 2/2. Its pathway is nucleotide-sugar biosynthesis; UDP-N-acetyl-alpha-D-glucosamine biosynthesis; UDP-N-acetyl-alpha-D-glucosamine from N-acetyl-alpha-D-glucosamine 1-phosphate: step 1/1. It participates in bacterial outer membrane biogenesis; LPS lipid A biosynthesis. In terms of biological role, catalyzes the last two sequential reactions in the de novo biosynthetic pathway for UDP-N-acetylglucosamine (UDP-GlcNAc). The C-terminal domain catalyzes the transfer of acetyl group from acetyl coenzyme A to glucosamine-1-phosphate (GlcN-1-P) to produce N-acetylglucosamine-1-phosphate (GlcNAc-1-P), which is converted into UDP-GlcNAc by the transfer of uridine 5-monophosphate (from uridine 5-triphosphate), a reaction catalyzed by the N-terminal domain. The polypeptide is Bifunctional protein GlmU (Burkholderia thailandensis (strain ATCC 700388 / DSM 13276 / CCUG 48851 / CIP 106301 / E264)).